Here is a 771-residue protein sequence, read N- to C-terminus: Tetratricopeptide repeat-containing protein trd-1 (771 aa).

TPR repeat units lie at residues 389-415 (LEMW…IRRL), 416-449 (IEQK…SDDR), 451-484 (ARAH…QPIQ), 485-518 (LGTW…QPDH), 520-552 (EAWN…NYEH), and 553-586 (PNVW…NKRG).

Belongs to the TTC27 family. In terms of tissue distribution, expressed in the spermatheca.

It is found in the cytoplasm. Developmental protein required for cell fate determination in both the germline and seam cells of the developing epidermis. Specifically, involved in sex determination and may function in parallel or downstream of other sex determination factors, including tra-2 and fem-3, to promote oogenesis in its role in the regulation of the switch from spermatogenesis to oogenesis in the gonads. Also implicated in the mitosis to meiosis switch in distal tip cells. The protein is Tetratricopeptide repeat-containing protein trd-1 of Caenorhabditis elegans.